The sequence spans 1856 residues: DNA-directed RNA polymerase II subunit RPB1 (1856 aa).

Residues Cys66, Cys69, Cys76, His79, Cys106, Cys109, Cys149, and Cys177 each contribute to the Zn(2+) site. A lid loop region spans residues 256–268 (PAVVTFGSAKNQD). A rudder loop region spans residues 314–331 (NCIPGLPTATQKGGRPLK). 3 residues coordinate Mg(2+): Asp489, Asp491, and Asp493. Residues 827-839 (PSEFFFHAMGGRE) are bridging helix. A Glycyl lysine isopeptide (Lys-Gly) (interchain with G-Cter in ubiquitin) cross-link involves residue Lys1260. Residues 1523–1856 (PTTGGMSPGA…PSSPTYDPNS (334 aa)) are disordered. The span at 1587–1856 (SMTSPHYSPT…PSSPTYDPNS (270 aa)) shows a compositional bias: low complexity. 27 consecutive repeat copies span residues 1593–1599 (YSPTSPS), 1600–1606 (YSPTSPA), 1616–1622 (YSPTSPS), 1623–1629 (YSPTSPS), 1630–1636 (YSPTSPS), 1637–1643 (YSPTSPS), 1644–1650 (YSPTSPS), 1651–1657 (YSPTSPS), 1658–1664 (YSPSSPS), 1665–1671 (YSPSSPS), 1672–1678 (YSPSSPR), 1679–1685 (YSPTSPT), 1686–1692 (YSPTSPT), 1693–1699 (YSPTSPT), 1700–1706 (YSPTSPT), 1707–1713 (YSPTSPS), 1720–1726 (YSPSSPK), 1727–1733 (YSPSSPT), 1734–1740 (YSPTSPS), 1741–1747 (YSPTSPQ), 1748–1754 (YSPTSPQ), 1755–1761 (YSPSSPT), 1769–1775 (YNPTSPR), 1782–1788 (YSPTSPT), 1789–1795 (YSPTSPS), 1796–1802 (YTPSSPQ), and 1803–1809 (YSPTSPT). Positions 1593–1816 (YSPTSPSYSP…SPTYTPSPSE (224 aa)) are C-terminal domain (CTD); 28 X 7 AA approximate tandem repeats of Y-[ST]-P-[ST]-S-P-[AGKNQRST]. One copy of the 28; approximate repeat lies at 1810–1816 (YTPSPSE).

This sequence belongs to the RNA polymerase beta' chain family. Component of the RNA polymerase II (Pol II) complex consisting of 12 subunits. Interacts with sig-7. Post-translationally, the tandem 7 residues repeats in the C-terminal domain (CTD) can be highly phosphorylated. The phosphorylation activates Pol II. Phosphorylation occurs mainly at residues 'Ser-2' and 'Ser-5' of the heptapeptide repeat and starts at the 3- to 4-cell embryonic stage. This phosphorylation also occurs in the early stages of oocyte development and is not detected in oocytes arrested at the meiotic diakinesis stage. In the somatic lineage, phosphorylation at 'Ser-2' is mediated by cdk-12 downstream of cdk-9 whereas in the germline lineage cdk-12 phosphorylates 'Ser-2' independently of cdk-9. Phosphorylation is likely mediated by cdk-7. May be dephosphorylated by fcp-1 in diakinetic oocytes and in 1-cell and 2-cell embryos. Dephosphorylated at 'Ser-5' of the heptapeptide repeats by ssup-72. The phosphorylation state is believed to result from the balanced action of site-specific CTD kinases and phosphatase, and a 'CTD code' that specifies the position of Pol II within the transcription cycle has been proposed. In terms of processing, following transcription stress, the elongating form of RNA polymerase II (RNA pol IIo) is polyubiquitinated via 'Lys-63'-linkages on Lys-1260 at DNA damage sites without leading to degradation: ubiquitination promotes RNA pol IIo backtracking to allow access by the transcription-coupled nucleotide excision repair (TC-NER) machinery. Subsequent DEF1-dependent polyubiquitination by the elongin complex via 'Lys-48'-linkages may lead to proteasome-mediated degradation; presumably at stalled RNA pol II where TC-NER has failed, to halt global transcription and enable 'last resort' DNA repair pathways.

Its subcellular location is the nucleus. It is found in the chromosome. The catalysed reaction is RNA(n) + a ribonucleoside 5'-triphosphate = RNA(n+1) + diphosphate. In terms of biological role, DNA-dependent RNA polymerase catalyzes the transcription of DNA into RNA using the four ribonucleoside triphosphates as substrates. Largest and catalytic component of RNA polymerase II which synthesizes mRNA precursors and many functional non-coding RNAs. Forms the polymerase active center together with the second largest subunit. Pol II is the central component of the basal RNA polymerase II transcription machinery. It is composed of mobile elements that move relative to each other. RPB1 is part of the core element with the central large cleft, the clamp element that moves to open and close the cleft and the jaws that are thought to grab the incoming DNA template. At the start of transcription, a single-stranded DNA template strand of the promoter is positioned within the central active site cleft of Pol II. A bridging helix emanates from RPB1 and crosses the cleft near the catalytic site and is thought to promote translocation of Pol II by acting as a ratchet that moves the RNA-DNA hybrid through the active site by switching from straight to bent conformations at each step of nucleotide addition. During transcription elongation, Pol II moves on the template as the transcript elongates. Elongation is influenced by the phosphorylation status of the C-terminal domain (CTD) of Pol II largest subunit (RPB1), which serves as a platform for assembly of factors that regulate transcription initiation, elongation, termination and mRNA processing. Involved in the transcription of several genes including those involved in embryogenesis. The chain is DNA-directed RNA polymerase II subunit RPB1 from Caenorhabditis elegans.